The following is a 185-amino-acid chain: Elongation factor P (185 aa).

It belongs to the elongation factor P family.

It localises to the cytoplasm. The protein operates within protein biosynthesis; polypeptide chain elongation. In terms of biological role, involved in peptide bond synthesis. Stimulates efficient translation and peptide-bond synthesis on native or reconstituted 70S ribosomes in vitro. Probably functions indirectly by altering the affinity of the ribosome for aminoacyl-tRNA, thus increasing their reactivity as acceptors for peptidyl transferase. The chain is Elongation factor P from Bordetella petrii (strain ATCC BAA-461 / DSM 12804 / CCUG 43448).